The following is a 261-amino-acid chain: uncharacterized protein (261 aa).

NADP(+) is bound at residue 22 to 46 (IVTGGNSGLGQAFAMALAKAGANIF). Substrate is bound at residue S153. Y166 acts as the Proton acceptor in catalysis.

This sequence belongs to the short-chain dehydrogenases/reductases (SDR) family.

This is an uncharacterized protein from Escherichia coli (strain K12).